The following is a 235-amino-acid chain: Nucleoside diphosphate kinase 4, chloroplastic (235 aa).

Residues Lys-93, Phe-141, Arg-169, Thr-175, Arg-186, and Asn-196 each contribute to the ATP site. The active-site Pros-phosphohistidine intermediate is His-199.

It belongs to the NDK family. In terms of assembly, homohexamer. Mg(2+) serves as cofactor.

Its subcellular location is the plastid. It is found in the chloroplast thylakoid lumen. The catalysed reaction is a 2'-deoxyribonucleoside 5'-diphosphate + ATP = a 2'-deoxyribonucleoside 5'-triphosphate + ADP. It catalyses the reaction a ribonucleoside 5'-diphosphate + ATP = a ribonucleoside 5'-triphosphate + ADP. Its function is as follows. Major role in the synthesis of nucleoside triphosphates other than ATP. The ATP gamma phosphate is transferred to the NDP beta phosphate via a ping-pong mechanism, using a phosphorylated active-site intermediate. Shows the highest specificity towards GDP. The polypeptide is Nucleoside diphosphate kinase 4, chloroplastic (NDK4) (Spinacia oleracea (Spinach)).